The chain runs to 246 residues: uncharacterized protein (246 aa).

It to M.jannaschii MJ1676.

This is an uncharacterized protein from Methanothermobacter thermautotrophicus (strain ATCC 29096 / DSM 1053 / JCM 10044 / NBRC 100330 / Delta H) (Methanobacterium thermoautotrophicum).